The following is a 155-amino-acid chain: Superoxide dismutase [Cu-Zn] (155 aa).

Cu cation contacts are provided by His-47, His-49, and His-64. Cys-58 and Cys-147 are oxidised to a cystine. 4 residues coordinate Zn(2+): His-64, His-72, His-81, and Asp-84. His-121 is a Cu cation binding site. Residue Arg-144 coordinates substrate.

This sequence belongs to the Cu-Zn superoxide dismutase family. In terms of assembly, homodimer. Cu cation serves as cofactor. It depends on Zn(2+) as a cofactor.

Its subcellular location is the cytoplasm. The enzyme catalyses 2 superoxide + 2 H(+) = H2O2 + O2. Its function is as follows. Destroys radicals which are normally produced within the cells and which are toxic to biological systems. This is Superoxide dismutase [Cu-Zn] (SOD1) from Kluyveromyces lactis (strain ATCC 8585 / CBS 2359 / DSM 70799 / NBRC 1267 / NRRL Y-1140 / WM37) (Yeast).